We begin with the raw amino-acid sequence, 333 residues long: Adenosine deaminase (333 aa).

Zn(2+) contacts are provided by H12 and H14. Residues H14, D16, and G170 each coordinate substrate. Residue H197 coordinates Zn(2+). The active-site Proton donor is the E200. D278 lines the Zn(2+) pocket. Residue D279 participates in substrate binding.

It belongs to the metallo-dependent hydrolases superfamily. Adenosine and AMP deaminases family. Adenosine deaminase subfamily. The cofactor is Zn(2+).

It carries out the reaction adenosine + H2O + H(+) = inosine + NH4(+). The catalysed reaction is 2'-deoxyadenosine + H2O + H(+) = 2'-deoxyinosine + NH4(+). Functionally, catalyzes the hydrolytic deamination of adenosine and 2-deoxyadenosine. In Escherichia coli (strain SMS-3-5 / SECEC), this protein is Adenosine deaminase.